The primary structure comprises 136 residues: Translation initiation factor 5A (136 aa).

The residue at position 37 (Lys37) is a Hypusine.

Belongs to the eIF-5A family.

It localises to the cytoplasm. Its function is as follows. Functions by promoting the formation of the first peptide bond. This is Translation initiation factor 5A (eIF5A) from Thermococcus onnurineus (strain NA1).